A 98-amino-acid chain; its full sequence is Feather keratin 4 (98 aa).

S2 carries the N-acetylserine modification.

This sequence belongs to the avian keratin family. In terms of assembly, the avian keratins (F-ker, S-ker, C-ker and B-ker) are a complex mixture of very similar polypeptides.

This chain is Feather keratin 4, found in Gallus gallus (Chicken).